A 156-amino-acid polypeptide reads, in one-letter code: Large ribosomal subunit protein eL24 (156 aa).

Positions 110-123 (RAAKEKQKQKELEK) are enriched in basic and acidic residues. The disordered stretch occupies residues 110-156 (RAAKEKQKQKELEKKAKKVEKKKPTLAPKQKAAKITQKPAPRVGGKR).

The protein belongs to the eukaryotic ribosomal protein eL24 family.

In Schistosoma japonicum (Blood fluke), this protein is Large ribosomal subunit protein eL24 (RPL24).